A 102-amino-acid chain; its full sequence is MQKARIKIASTNVRSLDEVANQIKQIAERTGVRMSGPIPLPTKRIRITTRKSPDGEGSATFDRWELRVHKRLIDIEADERAMRQIMRIRVPEDVTIEIELIS.

Positions 33–59 (RMSGPIPLPTKRIRITTRKSPDGEGSA) are disordered.

Belongs to the universal ribosomal protein uS10 family. In terms of assembly, part of the 30S ribosomal subunit.

Involved in the binding of tRNA to the ribosomes. The protein is Small ribosomal subunit protein uS10 of Pyrococcus furiosus (strain ATCC 43587 / DSM 3638 / JCM 8422 / Vc1).